The chain runs to 759 residues: Tripartite motif-containing protein 46 (759 aa).

A required for proximal axon localization, axon formation and migration region spans residues 1–166; it reads MAEGEDMQTF…VERYRQSVSV (166 aa). Residues 33 to 59 form an RING-type 1; degenerate zinc finger; the sequence is CPVCQEMYKQPLVLPCTHNVCQACARE. A disordered region spans residues 67–98; that stretch reads IGHGGDPSSEPTSPASTPSTRSPRLSRRTLPK. Residues 73-89 are compositionally biased toward low complexity; that stretch reads PSSEPTSPASTPSTRSP. The segment at 172-231 adopts an RING-type 2; degenerate zinc-finger fold; the sequence is CQLCKPPPLEATKGCTECRATFCNECFKLFHPWGTQKAQHEPTLPTLSFRPKGLMCPDHK. A B box-type zinc finger spans residues 222-263; that stretch reads PKGLMCPDHKEEVTHYCKTCQRLVCQLCRVRRTHSGHKITPV. Residues Cys-227, His-230, Cys-249, and His-255 each contribute to the Zn(2+) site. A coiled-coil region spans residues 322 to 400; it reads AVLEEKRASL…RATEALQTFR (79 aa). Ser-330 is modified (phosphoserine). The 58-residue stretch at 370-427 folds into the COS domain; it reads LKETDQPCFVQAAKQLHNRIARATEALQTFRPAASSSFRHCQLDVGREMKLLTELSFL. The required for microtubule association, proximal axon localization and axon formation stretch occupies residues 411–429; that stretch reads QLDVGREMKLLTELSFLRV. The Fibronectin type-III domain occupies 429–528; it reads VPEAPVIDTQ…EDVHLHTPPA (100 aa). The B30.2/SPRY domain occupies 526–747; sequence PPAPVLHFFL…LQEPVGTKPE (222 aa). Ser-627 carries the post-translational modification Phosphoserine.

This sequence belongs to the TRIM/RBCC family. Interacts with TUBB3 and TUBA4A. Expressed in the central nervous system, including pyramidal neurons and interneurons in the cortex and hippocampus and all neuronal cell types in the cerebral and cerebellar cortex, and in the peripheral nervous system, including the dorsal root ganglion neurons.

Its subcellular location is the cell projection. It is found in the axon. The protein localises to the cytoplasm. The protein resides in the cytoskeleton. Functionally, microtubule-associated protein that is involved in the formation of parallel microtubule bundles linked by cross-bridges in the proximal axon. Required for the uniform orientation and maintenance of the parallel microtubule fascicles, which are important for efficient cargo delivery and trafficking in axons. Thereby also required for proper axon formation, the establishment of neuronal polarity and proper neuronal migration. This chain is Tripartite motif-containing protein 46 (Trim46), found in Mus musculus (Mouse).